A 287-amino-acid polypeptide reads, in one-letter code: 4-diphosphocytidyl-2-C-methyl-D-erythritol kinase (287 aa).

The active site involves Lys-11. 93–103 (PFGAGLGGGSS) contributes to the ATP binding site. Asp-135 is a catalytic residue.

Belongs to the GHMP kinase family. IspE subfamily.

It carries out the reaction 4-CDP-2-C-methyl-D-erythritol + ATP = 4-CDP-2-C-methyl-D-erythritol 2-phosphate + ADP + H(+). It functions in the pathway isoprenoid biosynthesis; isopentenyl diphosphate biosynthesis via DXP pathway; isopentenyl diphosphate from 1-deoxy-D-xylulose 5-phosphate: step 3/6. Catalyzes the phosphorylation of the position 2 hydroxy group of 4-diphosphocytidyl-2C-methyl-D-erythritol. This is 4-diphosphocytidyl-2-C-methyl-D-erythritol kinase from Chlorobium luteolum (strain DSM 273 / BCRC 81028 / 2530) (Pelodictyon luteolum).